An 89-amino-acid polypeptide reads, in one-letter code: MTEAKKSLKRTLIGKVVSDKRAKTVTVLVERRVKHELYGKIVAKTSKYHAHDEKGEYKLGDTIEITESRPISKTKNWVVTRLVEKAVLV.

This sequence belongs to the universal ribosomal protein uS17 family. Part of the 30S ribosomal subunit.

One of the primary rRNA binding proteins, it binds specifically to the 5'-end of 16S ribosomal RNA. The polypeptide is Small ribosomal subunit protein uS17 (Variovorax paradoxus (strain S110)).